The primary structure comprises 173 residues: Large ribosomal subunit protein uL10 (173 aa).

This sequence belongs to the universal ribosomal protein uL10 family. In terms of assembly, part of the ribosomal stalk of the 50S ribosomal subunit. The N-terminus interacts with L11 and the large rRNA to form the base of the stalk. The C-terminus forms an elongated spine to which L12 dimers bind in a sequential fashion forming a multimeric L10(L12)X complex.

Its function is as follows. Forms part of the ribosomal stalk, playing a central role in the interaction of the ribosome with GTP-bound translation factors. This is Large ribosomal subunit protein uL10 from Christiangramia forsetii (strain DSM 17595 / CGMCC 1.15422 / KT0803) (Gramella forsetii).